The following is a 644-amino-acid chain: Exoribonuclease 2 (644 aa).

The RNB domain occupies 189-516 (REDLTALDFV…NHRLLKAVIK (328 aa)). The S1 motif domain maps to 561–643 (DTRFAAEIVD…ETRSIIARPV (83 aa)).

It belongs to the RNR ribonuclease family. RNase II subfamily.

The protein localises to the cytoplasm. The enzyme catalyses Exonucleolytic cleavage in the 3'- to 5'-direction to yield nucleoside 5'-phosphates.. Functionally, involved in mRNA degradation. Hydrolyzes single-stranded polyribonucleotides processively in the 3' to 5' direction. This Shigella boydii serotype 18 (strain CDC 3083-94 / BS512) protein is Exoribonuclease 2.